Reading from the N-terminus, the 72-residue chain is Translation initiation factor IF-1 (72 aa).

An S1-like domain is found at 1–72 (MSKEENIEMQ…TKGRIIFRSR (72 aa)).

The protein belongs to the IF-1 family. In terms of assembly, component of the 30S ribosomal translation pre-initiation complex which assembles on the 30S ribosome in the order IF-2 and IF-3, IF-1 and N-formylmethionyl-tRNA(fMet); mRNA recruitment can occur at any time during PIC assembly.

The protein resides in the cytoplasm. In terms of biological role, one of the essential components for the initiation of protein synthesis. Stabilizes the binding of IF-2 and IF-3 on the 30S subunit to which N-formylmethionyl-tRNA(fMet) subsequently binds. Helps modulate mRNA selection, yielding the 30S pre-initiation complex (PIC). Upon addition of the 50S ribosomal subunit IF-1, IF-2 and IF-3 are released leaving the mature 70S translation initiation complex. The sequence is that of Translation initiation factor IF-1 from Buchnera aphidicola subsp. Acyrthosiphon pisum (strain APS) (Acyrthosiphon pisum symbiotic bacterium).